A 980-amino-acid chain; its full sequence is Valine--tRNA ligase (980 aa).

Residues 1-40 (MADKGCEAAQSKDSSAPGSGEPRPKTEKELERERQKAAKL) form a disordered region. The span at 22–40 (PRPKTEKELERERQKAAKL) shows a compositional bias: basic and acidic residues. A 'HIGH' region motif is present at residues 139–149 (PNVTGALHIGH). A 'KMSKS' region motif is present at residues 652–656 (KMSKS). K655 contacts ATP.

Belongs to the class-I aminoacyl-tRNA synthetase family.

It localises to the cytoplasm. The enzyme catalyses tRNA(Val) + L-valine + ATP = L-valyl-tRNA(Val) + AMP + diphosphate. This Schizosaccharomyces pombe (strain 972 / ATCC 24843) (Fission yeast) protein is Valine--tRNA ligase (vas2).